The sequence spans 253 residues: CD151 antigen (253 aa).

The Cytoplasmic segment spans residues 1–18; that stretch reads MGEFNEKKATCGTVCLKY. Residues Cys11 and Cys15 are each lipidated (S-palmitoyl cysteine). Residues 19–39 form a helical membrane-spanning segment; sequence LLFTYNCCFWLAGLAVMAVGI. The Extracellular portion of the chain corresponds to 40–57; that stretch reads WTLALKSDYISLLASSTY. A helical transmembrane segment spans residues 58-78; that stretch reads LATAYILVVAGVVVMVTGVLG. Residues 79–91 are Cytoplasmic-facing; that stretch reads CCATFKERRNLLR. A helical transmembrane segment spans residues 92–112; that stretch reads LYFILLLIIFLLEIIAGILAY. Residues 113–221 are Extracellular-facing; sequence VYYQQLNTEL…LETFIQEHLR (109 aa). Asn159 carries an N-linked (GlcNAc...) asparagine glycan. Residues 222–242 form a helical membrane-spanning segment; the sequence is VIGAVGIGIACVQVFGMIFTC. 2 S-palmitoyl cysteine lipidation sites follow: Cys242 and Cys243. Over 243-253 the chain is Cytoplasmic; sequence CLYRSLKLEHY.

The protein belongs to the tetraspanin (TM4SF) family. In terms of assembly, interacts with integrins ITGA3:ITGB1, ITGA5:ITGB1, ITGA3:ITGB1 and ITGA6:ITGB4 and with CD9 and CD181. Interacts (via the second extracellular domain) with integrin ITGAV:ITGB3. Interacts with ITGA3; this interaction modulates ITGA3 glycosylation pattern. Interacts with F11R. Interacts with RAC1 and CDC42; these interactions mediate physical association of RAC1 and CDC42 with integrin adhesion receptor complexes. Palmitoylated. Palmitoylation by ZDHHC2 regulates CD151 expression, association with other tetraspanin family proteins and function in cell adhesion. In terms of processing, ubiquitinated by RNF128 on lysine residues present in the tetraspanin amino terminus via 'Lys-48'-linked ubiquitin leading to proteasomal degradation.

The protein resides in the cell membrane. In terms of biological role, structural component of specialized membrane microdomains known as tetraspanin-enriched microdomains (TERMs), which act as platforms for receptor clustering and signaling. Plays a role in various cellular and molecular mechanism through its association with both integrin and non-integrin proteins. These interactions facilitate critical cellular functions, including cell-to-cell communication, wound healing, platelet aggregation, trafficking, cell motility, and angiogenesis. Via interaction with JAM-A/F11R and integrin ITGA3:ITGB1, promotes the recruitment of signaling molecules such as RAC1, CDC42 and RhoGTPases to facilitate the polarization of epithelial cells and the reorganization of the actin cytoskeleton, which are critical steps in cell migration process. Regulates the glycosylation pattern of ITGA3:ITGB1 thereby modulating its activity. Plays an essential role in the maintenance of central laminin-binding integrin ITGA6:ITGB4-containing adhesion complexes. Essential for the proper assembly of the glomerular and tubular basement membranes in kidney. Contributes to T-cell activation by modulating integrin signaling leading to activation of downstream targets PTK2 and MAPK1/MAPK3. This chain is CD151 antigen (Cd151), found in Mus musculus (Mouse).